The primary structure comprises 110 residues: Phosphoribosyl-AMP cyclohydrolase (110 aa).

Asp80 is a Mg(2+) binding site. Cys81 contributes to the Zn(2+) binding site. Residues Asp82 and Asp84 each contribute to the Mg(2+) site. The Zn(2+) site is built by Cys97 and Cys104.

It belongs to the PRA-CH family. As to quaternary structure, homodimer. Requires Mg(2+) as cofactor. It depends on Zn(2+) as a cofactor.

It localises to the cytoplasm. The enzyme catalyses 1-(5-phospho-beta-D-ribosyl)-5'-AMP + H2O = 1-(5-phospho-beta-D-ribosyl)-5-[(5-phospho-beta-D-ribosylamino)methylideneamino]imidazole-4-carboxamide. It functions in the pathway amino-acid biosynthesis; L-histidine biosynthesis; L-histidine from 5-phospho-alpha-D-ribose 1-diphosphate: step 3/9. Its function is as follows. Catalyzes the hydrolysis of the adenine ring of phosphoribosyl-AMP. In Clostridium botulinum (strain Okra / Type B1), this protein is Phosphoribosyl-AMP cyclohydrolase.